Here is a 356-residue protein sequence, read N- to C-terminus: UDP-N-acetylglucosamine--N-acetylmuramyl-(pentapeptide) pyrophosphoryl-undecaprenol N-acetylglucosamine transferase (356 aa).

Residues 11–13 (TGG), asparagine 122, serine 186, and glutamine 287 contribute to the UDP-N-acetyl-alpha-D-glucosamine site.

Belongs to the glycosyltransferase 28 family. MurG subfamily.

The protein resides in the cell inner membrane. The enzyme catalyses di-trans,octa-cis-undecaprenyl diphospho-N-acetyl-alpha-D-muramoyl-L-alanyl-D-glutamyl-meso-2,6-diaminopimeloyl-D-alanyl-D-alanine + UDP-N-acetyl-alpha-D-glucosamine = di-trans,octa-cis-undecaprenyl diphospho-[N-acetyl-alpha-D-glucosaminyl-(1-&gt;4)]-N-acetyl-alpha-D-muramoyl-L-alanyl-D-glutamyl-meso-2,6-diaminopimeloyl-D-alanyl-D-alanine + UDP + H(+). It functions in the pathway cell wall biogenesis; peptidoglycan biosynthesis. Cell wall formation. Catalyzes the transfer of a GlcNAc subunit on undecaprenyl-pyrophosphoryl-MurNAc-pentapeptide (lipid intermediate I) to form undecaprenyl-pyrophosphoryl-MurNAc-(pentapeptide)GlcNAc (lipid intermediate II). This is UDP-N-acetylglucosamine--N-acetylmuramyl-(pentapeptide) pyrophosphoryl-undecaprenol N-acetylglucosamine transferase from Anaplasma marginale (strain St. Maries).